Here is a 613-residue protein sequence, read N- to C-terminus: Laccase 1 (613 aa).

Positions 1 to 20 are cleaved as a signal peptide; sequence MSSSVRLLLIVALLYTNSWA. Plastocyanin-like domains follow at residues 29-142, 171-359, and 468-598; these read ITWE…IRPK, YLVV…MRVP, and DATC…ILDG. N-linked (GlcNAc...) asparagine glycosylation occurs at Asn74. Cu cation is bound by residues His78, His80, His122, and His124. Residues Asn256, Asn279, and Asn484 are each glycosylated (N-linked (GlcNAc...) asparagine). Positions 506, 509, and 511 each coordinate Cu cation. An N-linked (GlcNAc...) asparagine glycan is attached at Asn526. Cu cation contacts are provided by His580, Cys581, His582, and His586.

It belongs to the multicopper oxidase family. Requires Cu cation as cofactor.

It localises to the cell surface. It participates in pigment biosynthesis. Functionally, laccase; part of the Pks1 gene cluster that mediates the biosynthesis of an anthraquinone derivative pigment that contributes to conidial pigmentation that provides protection from UV radiation, heat and cold stress. The polyketide synthase Pks1 produces 1-acetyl-2,4,6,8-tetrahydroxy-9,10-anthraquinone though condensation of acetyl-CoA with malonyl-CoA. The dehydratase EthD and the laccase Mlac1 further convert the anthraquinone derivative into the final conidial pigment. The chain is Laccase 1 from Metarhizium acridum (strain CQMa 102).